The chain runs to 835 residues: Probable alpha-glucuronidase A (835 aa).

Positions 1–18 (MRWSFLTVLLWLVSLTGA) are cleaved as a signal peptide. N-linked (GlcNAc...) asparagine glycosylation is found at Asn-49, Asn-101, Asn-148, Asn-221, Asn-278, Asn-309, Asn-342, Asn-460, Asn-522, Asn-571, Asn-677, and Asn-727.

The protein belongs to the glycosyl hydrolase 67 family.

The protein resides in the secreted. The enzyme catalyses an alpha-D-glucuronoside + H2O = D-glucuronate + an alcohol. Alpha-glucuronidase involved in the hydrolysis of xylan, a major structural heterogeneous polysaccharide found in plant biomass representing the second most abundant polysaccharide in the biosphere, after cellulose. Releases 4-O-methylglucuronic acid from xylan. The protein is Probable alpha-glucuronidase A (aguA) of Aspergillus oryzae (strain ATCC 42149 / RIB 40) (Yellow koji mold).